A 314-amino-acid polypeptide reads, in one-letter code: tRNA pseudouridine synthase B (314 aa).

Residue H43 coordinates substrate. The active-site Nucleophile is D48. The substrate site is built by Y76, Y179, and L200.

It belongs to the pseudouridine synthase TruB family. Type 1 subfamily.

The enzyme catalyses uridine(55) in tRNA = pseudouridine(55) in tRNA. Responsible for synthesis of pseudouridine from uracil-55 in the psi GC loop of transfer RNAs. This Pectobacterium atrosepticum (strain SCRI 1043 / ATCC BAA-672) (Erwinia carotovora subsp. atroseptica) protein is tRNA pseudouridine synthase B.